A 392-amino-acid chain; its full sequence is O-phospho-L-seryl-tRNA:Cys-tRNA synthase (392 aa).

Pyridoxal 5'-phosphate is bound by residues 85–86 (AR), asparagine 190, and 213–215 (SGH). Position 216 is an N6-(pyridoxal phosphate)lysine (lysine 216).

It belongs to the SepCysS family. Homodimer. Interacts with SepRS. The cofactor is pyridoxal 5'-phosphate.

It carries out the reaction O-phospho-L-seryl-tRNA(Cys) + hydrogen sulfide + H(+) = L-cysteinyl-tRNA(Cys) + phosphate. Functionally, converts O-phospho-L-seryl-tRNA(Cys) (Sep-tRNA(Cys)) to L-cysteinyl-tRNA(Cys) (Cys-tRNA(Cys)). In Methanoculleus marisnigri (strain ATCC 35101 / DSM 1498 / JR1), this protein is O-phospho-L-seryl-tRNA:Cys-tRNA synthase.